The primary structure comprises 296 residues: Enoyl-CoA hydratase AFT3-1 (296 aa).

A Peroxisomal targeting signal type 1 motif is present at residues 294–296 (PKL).

It belongs to the enoyl-CoA hydratase/isomerase family.

It is found in the peroxisome. The enzyme catalyses a (3S)-3-hydroxyacyl-CoA = a (2E)-enoyl-CoA + H2O. It catalyses the reaction a 4-saturated-(3S)-3-hydroxyacyl-CoA = a (3E)-enoyl-CoA + H2O. It participates in mycotoxin biosynthesis. Functionally, enoyl-CoA hydratase; part of the gene clusters that mediate the biosynthesis of the host-selective toxins (HSTs) AF-toxins responsible for Alternaria black spot of strawberry disease by the strawberry pathotype. AF-toxin I and III are valine derivatives of 2,3-dyhydroxy-isovaleric acid and 2-hydroxy-isovaleric acid respectively, while AF II is an isoleucine derivative of 2-hydroxy-valeric acid. These derivatives are bound to a 9,10-epoxy-8-hydroxy-9-methyl-decatrienoic acid (EDA) moiety. On cellular level, AF-toxins affect plasma membrane of susceptible cells and cause a sudden increase in loss of K(+) after a few minutes of toxin treatment. The aldo-keto reductase AFTS1 catalyzes the conversion of 2-keto-isovaleric acid (2-KIV) to 2-hydroxy-isovaleric acid (2-HIV) by reduction of its ketone to an alcohol. The acyl-CoA ligase AFT1, the hydrolase AFT2 and the enoyl-CoA hydratases AFT3 and AFT6, but also the polyketide synthase AFT9, the acyl-CoA dehydrogenase AFT10, the cytochrome P450 monooxygenase AFT11 and the oxidoreductase AFT12 are all involved in the biosynthesis of the AK-, AF- and ACT-toxin common EDA structural moiety. The exact function of each enzyme, and of additional enzymes identified within the AF-toxin clusters have still to be determined. In Alternaria alternata (Alternaria rot fungus), this protein is Enoyl-CoA hydratase AFT3-1 (AFT3-1).